We begin with the raw amino-acid sequence, 750 residues long: GTP pyrophosphokinase rsh (750 aa).

The HD domain occupies Tyr45–Met144. Residues Asp390–Arg451 enclose the TGS domain. The interval Ala587–Leu613 is disordered. Residues Arg676–Gly750 enclose the ACT domain.

It belongs to the RelA/SpoT family.

The catalysed reaction is GTP + ATP = guanosine 3'-diphosphate 5'-triphosphate + AMP. In terms of biological role, functions as a (p)ppGpp synthase. In eubacteria ppGpp (guanosine 3'-diphosphate 5'-diphosphate) is a mediator of the stringent response that coordinates a variety of cellular activities in response to changes in nutritional abundance. Plays a role in adaptation of Brucella to its intracellular host environment. In Brucella abortus (strain 2308), this protein is GTP pyrophosphokinase rsh (rsh).